Consider the following 347-residue polypeptide: tRNA N6-adenosine threonylcarbamoyltransferase (347 aa).

Fe cation is bound by residues His115 and His119. Residues 138 to 142 (LVSGG), Asp171, Gly184, and Asn277 contribute to the substrate site. Residue Asp305 coordinates Fe cation.

The protein belongs to the KAE1 / TsaD family. The cofactor is Fe(2+).

It is found in the cytoplasm. It carries out the reaction L-threonylcarbamoyladenylate + adenosine(37) in tRNA = N(6)-L-threonylcarbamoyladenosine(37) in tRNA + AMP + H(+). Required for the formation of a threonylcarbamoyl group on adenosine at position 37 (t(6)A37) in tRNAs that read codons beginning with adenine. Is involved in the transfer of the threonylcarbamoyl moiety of threonylcarbamoyl-AMP (TC-AMP) to the N6 group of A37, together with TsaE and TsaB. TsaD likely plays a direct catalytic role in this reaction. The sequence is that of tRNA N6-adenosine threonylcarbamoyltransferase from Polaromonas sp. (strain JS666 / ATCC BAA-500).